A 624-amino-acid chain; its full sequence is Chaperone protein DnaK (624 aa).

A Phosphothreonine; by autocatalysis modification is found at threonine 174. Disordered regions lie at residues 470 to 504 (ITIK…KEEV) and 577 to 624 (NGGA…DPDK). The span at 481–504 (EEIKKMQKDAEEHAEEDKKRKEEV) shows a compositional bias: basic and acidic residues. Over residues 577 to 605 (NGGAQGAAGQAGPQGPQNGGQPNNDNGSD) the composition is skewed to low complexity. The span at 615 to 624 (GDFHKVDPDK) shows a compositional bias: basic and acidic residues.

The protein belongs to the heat shock protein 70 family.

In terms of biological role, acts as a chaperone. This is Chaperone protein DnaK from Lactobacillus johnsonii (strain CNCM I-12250 / La1 / NCC 533).